The chain runs to 257 residues: Steroid 5-alpha-reductase DET2 (257 aa).

A run of 6 helical transmembrane segments spans residues 11–31 (FIVF…QFFT), 47–67 (ISPP…TIIV), 78–97 (LAFL…TIIY), 110–130 (FPLN…YIQS), 151–171 (IGLV…GVLL), and 200–220 (IMEW…AFFV).

It belongs to the steroid 5-alpha reductase family. As to expression, mostly expressed in leaves and hypocotyls and, to a lower extent, in stems, cotyledons, roots, seeds and callus.

It is found in the membrane. The catalysed reaction is a 3-oxo-5alpha-steroid + NADP(+) = a 3-oxo-Delta(4)-steroid + NADPH + H(+). It functions in the pathway plant hormone biosynthesis; brassinosteroid biosynthesis. Repressed by steroid (4-MA, VG106, PD91, PD17, Finasteride) and non-steroid (AS601811, AFA27, AFA76, AFA131, AFA192) inhibitors; steroid inhibitors are generally more efficient. Involved in a reduction step in the biosynthesis of the plant steroid, brassinolide (BL). Can use progesterone, testosterone, androstenedione and campestenone as substrate. The polypeptide is Steroid 5-alpha-reductase DET2 (Solanum lycopersicum (Tomato)).